Here is a 93-residue protein sequence, read N- to C-terminus: Small ribosomal subunit protein uS19 (93 aa).

This sequence belongs to the universal ribosomal protein uS19 family.

Protein S19 forms a complex with S13 that binds strongly to the 16S ribosomal RNA. The sequence is that of Small ribosomal subunit protein uS19 from Dehalococcoides mccartyi (strain ATCC BAA-2266 / KCTC 15142 / 195) (Dehalococcoides ethenogenes (strain 195)).